Consider the following 288-residue polypeptide: UPF0276 protein VP3015 (288 aa).

This sequence belongs to the UPF0276 family.

The chain is UPF0276 protein VP3015 from Vibrio parahaemolyticus serotype O3:K6 (strain RIMD 2210633).